The primary structure comprises 271 residues: Mannosyl-3-phosphoglycerate phosphatase (271 aa).

Aspartate 13 functions as the Nucleophile in the catalytic mechanism. Mg(2+) contacts are provided by aspartate 13, aspartate 15, and aspartate 214.

Belongs to the HAD-like hydrolase superfamily. MPGP family. Mg(2+) is required as a cofactor.

Its subcellular location is the cytoplasm. The enzyme catalyses 2-O-(alpha-D-mannosyl)-3-phosphoglycerate + H2O = (2R)-2-O-(alpha-D-mannosyl)-glycerate + phosphate. This is Mannosyl-3-phosphoglycerate phosphatase (yedP) from Escherichia coli O157:H7.